A 184-amino-acid polypeptide reads, in one-letter code: GTP cyclohydrolase 1 (184 aa).

Residues Cys-75, His-78, and Cys-146 each contribute to the Zn(2+) site.

It belongs to the GTP cyclohydrolase I family. As to quaternary structure, toroid-shaped homodecamer, composed of two pentamers of five dimers.

It catalyses the reaction GTP + H2O = 7,8-dihydroneopterin 3'-triphosphate + formate + H(+). It functions in the pathway cofactor biosynthesis; 7,8-dihydroneopterin triphosphate biosynthesis; 7,8-dihydroneopterin triphosphate from GTP: step 1/1. This Streptococcus sanguinis (strain SK36) protein is GTP cyclohydrolase 1.